We begin with the raw amino-acid sequence, 312 residues long: Malate dehydrogenase (312 aa).

NAD(+) contacts are provided by residues 7–13 (GAAGGIG) and Asp34. Substrate-binding residues include Arg81 and Arg87. Residues Asn94 and 117–119 (ITN) each bind NAD(+). Positions 119 and 153 each coordinate substrate. His177 serves as the catalytic Proton acceptor. Residue Met227 coordinates NAD(+).

The protein belongs to the LDH/MDH superfamily. MDH type 1 family. In terms of assembly, homodimer.

The enzyme catalyses (S)-malate + NAD(+) = oxaloacetate + NADH + H(+). In terms of biological role, catalyzes the reversible oxidation of malate to oxaloacetate. This chain is Malate dehydrogenase, found in Salmonella choleraesuis (strain SC-B67).